Here is a 394-residue protein sequence, read N- to C-terminus: NAD(P)H-quinone oxidoreductase subunit H (394 aa).

Belongs to the complex I 49 kDa subunit family. NDH-1 can be composed of about 15 different subunits; different subcomplexes with different compositions have been identified which probably have different functions.

It localises to the cellular thylakoid membrane. The catalysed reaction is a plastoquinone + NADH + (n+1) H(+)(in) = a plastoquinol + NAD(+) + n H(+)(out). It catalyses the reaction a plastoquinone + NADPH + (n+1) H(+)(in) = a plastoquinol + NADP(+) + n H(+)(out). Functionally, NDH-1 shuttles electrons from an unknown electron donor, via FMN and iron-sulfur (Fe-S) centers, to quinones in the respiratory and/or the photosynthetic chain. The immediate electron acceptor for the enzyme in this species is believed to be plastoquinone. Couples the redox reaction to proton translocation, and thus conserves the redox energy in a proton gradient. Cyanobacterial NDH-1 also plays a role in inorganic carbon-concentration. In Synechococcus sp. (strain JA-3-3Ab) (Cyanobacteria bacterium Yellowstone A-Prime), this protein is NAD(P)H-quinone oxidoreductase subunit H.